We begin with the raw amino-acid sequence, 525 residues long: GMP synthase [glutamine-hydrolyzing] (525 aa).

The Glutamine amidotransferase type-1 domain maps to 9–207; it reads RILILDFGSQ…VRDICQCEAL (199 aa). The active-site Nucleophile is the C86. Active-site residues include H181 and E183. The GMPS ATP-PPase domain occupies 208-400; that stretch reads WTPAKIIDDA…LGLPYDMLYR (193 aa). 235-241 provides a ligand contact to ATP; it reads SGGVDSS.

As to quaternary structure, homodimer.

The catalysed reaction is XMP + L-glutamine + ATP + H2O = GMP + L-glutamate + AMP + diphosphate + 2 H(+). It participates in purine metabolism; GMP biosynthesis; GMP from XMP (L-Gln route): step 1/1. In terms of biological role, catalyzes the synthesis of GMP from XMP. The polypeptide is GMP synthase [glutamine-hydrolyzing] (Escherichia coli (strain K12 / MC4100 / BW2952)).